The sequence spans 158 residues: Transcription elongation factor GreA (158 aa).

The protein belongs to the GreA/GreB family.

Functionally, necessary for efficient RNA polymerase transcription elongation past template-encoded arresting sites. The arresting sites in DNA have the property of trapping a certain fraction of elongating RNA polymerases that pass through, resulting in locked ternary complexes. Cleavage of the nascent transcript by cleavage factors such as GreA or GreB allows the resumption of elongation from the new 3'terminus. GreA releases sequences of 2 to 3 nucleotides. The protein is Transcription elongation factor GreA of Methylobacterium nodulans (strain LMG 21967 / CNCM I-2342 / ORS 2060).